Consider the following 591-residue polypeptide: MAKEKIIGIDLGTTNSVVSVIEGGQPIILENPEGQRTTPSVVAFKNSDIIVGGAAKRQAVTNPNVVQSIKSKMGTTSKVNLEGKDYSPEQISAEILRYMKNYAEAKLGQKVTKAVITVPAYFNDAQRKATKDAGTIAGLQVERIINEPTAAALAYGLDKQDKEETILVYDLGGGTFDVSILAIGGGSFDVIATSGNNKLGGDNFDEEIIKWLLGKIKAEYNIDLSKEKMALQRLKDEAEKAKINLSSQLEVEINLPFIAMNESGPISFATTLTRSEFNKITKHLVDLTIQPVKDALSAAKKTPSEINEVLLVGGSTRIPAVQELVKSLLNKEPNRSINPDEVVAMGAAVQGGVLAGEVTDILLLDVTPLSLGIETMGGVMTKLIERNTTIPAKRTQIFSTATDNQPAVDINVLQGERAMAADNKSLGQFQLTGIQPAPRGVPQIEVTFEIDANGIVSVSAKDKNTNEEKTITISNSGNLSEAEVERMIKEAQENAANDEVKKKNIELKNKAENYINIIENSLLQAGDKISAEQKEQSQKMVDEIKELVKNENYEALEQKMAELEQAMAQAAEFANKQNESDPNNNSSEQNN.

At threonine 175 the chain carries Phosphothreonine; by autocatalysis. Low complexity predominate over residues alanine 568–glutamine 577. The disordered stretch occupies residues alanine 568 to asparagine 591. Over residues serine 580–asparagine 591 the composition is skewed to polar residues.

It belongs to the heat shock protein 70 family.

In terms of biological role, acts as a chaperone. This Mycoplasma mycoides subsp. mycoides SC (strain CCUG 32753 / NCTC 10114 / PG1) protein is Chaperone protein DnaK.